We begin with the raw amino-acid sequence, 283 residues long: Hydroxyacylglutathione hydrolase-like protein (283 aa).

Zn(2+) is bound by residues histidine 54, histidine 56, aspartate 58, histidine 59, histidine 110, aspartate 134, and histidine 173.

The protein belongs to the metallo-beta-lactamase superfamily. Glyoxalase II family. Zn(2+) serves as cofactor.

Functionally, hydrolase acting on ester bonds. The chain is Hydroxyacylglutathione hydrolase-like protein (Haghl) from Mus musculus (Mouse).